The chain runs to 502 residues: ATP synthase subunit alpha, chloroplastic (502 aa).

Position 170–177 (170–177 (GDRQTGKS)) interacts with ATP.

This sequence belongs to the ATPase alpha/beta chains family. F-type ATPases have 2 components, CF(1) - the catalytic core - and CF(0) - the membrane proton channel. CF(1) has five subunits: alpha(3), beta(3), gamma(1), delta(1), epsilon(1). CF(0) has four main subunits: a, b, b' and c.

It localises to the plastid. Its subcellular location is the chloroplast thylakoid membrane. The enzyme catalyses ATP + H2O + 4 H(+)(in) = ADP + phosphate + 5 H(+)(out). In terms of biological role, produces ATP from ADP in the presence of a proton gradient across the membrane. The alpha chain is a regulatory subunit. This chain is ATP synthase subunit alpha, chloroplastic, found in Guillardia theta (Cryptophyte).